Here is a 187-residue protein sequence, read N- to C-terminus: Homeobox protein engrailed-like ceh-16 (187 aa).

Disordered regions lie at residues 14-43 (PYPC…NGTP), 60-100 (SDRP…DQLD), and 144-167 (KSTS…HPSI). The segment covering 20–39 (PTISTPATSPSSISPTFASP) has biased composition (low complexity). Residues 87 to 146 (EKRPRTAFTGDQLDRLKTEFRESRYLTEKRRQELAHELGLNESQIKIWFQNKRAKLKKST) constitute a DNA-binding region (homeobox). Over residues 145 to 163 (STSSVPRDRCSSVTPNPHN) the composition is skewed to polar residues.

This sequence belongs to the engrailed homeobox family. Expressed in seam cells.

It is found in the nucleus. Its subcellular location is the cytoplasm. Its function is as follows. Transcriptional regulator which binds to DNA to regulate gene expression and promote seam cell development and differentiation during embryogenesis. Plays a role in maintaining the boundaries between the lateral rows of seam cells and the ventral and dorsal row of epidermal cells during embryonic development. Negatively regulates the expression of the fusion effector protein eff-1 to prevent seam cell fusion with the dorsal and ventral epidermal cells during embryonic elongation. Positively regulates seam cell self-renewal and expansion during the L2 larval stage to promote seam cell development. This role does not seem to be via regulation of eff-1 expression. Specifically, it is required for the asymmetric division of the V5.p seam cell during the L2 larval stage, and in turn the asymmetric nuclear distribution of pop-1 in V5.p daughter cells. The chain is Homeobox protein engrailed-like ceh-16 from Caenorhabditis elegans.